A 622-amino-acid chain; its full sequence is Probable ATP-citrate synthase (622 aa).

ATP is bound by residues 228–248 (ALRYEKLPEVQMIVILGELGG) and 279–305 (FPTEVQFGHAGAKSGGETESADAKNKA). Glu-245 contacts Mg(2+). The active-site Tele-phosphohistidine intermediate is the His-287. 306–316 (LREAGAVVPTS) is a binding site for CoA.

In the N-terminal section; belongs to the succinate/malate CoA ligase beta subunit family. The protein in the C-terminal section; belongs to the succinate/malate CoA ligase alpha subunit family. As to quaternary structure, homotetramer.

The protein resides in the cytoplasm. The enzyme catalyses oxaloacetate + acetyl-CoA + ADP + phosphate = citrate + ATP + CoA. In terms of biological role, catalyzes the cleavage of citrate into oxaloacetate and acetyl-CoA, the latter serving as common substrate in multiple biochemical reactions in protein, carbohydrate and lipid metabolism. The protein is Probable ATP-citrate synthase (acly) of Dictyostelium discoideum (Social amoeba).